The chain runs to 201 residues: Imidazoleglycerol-phosphate dehydratase (201 aa).

The protein belongs to the imidazoleglycerol-phosphate dehydratase family.

The protein resides in the cytoplasm. It catalyses the reaction D-erythro-1-(imidazol-4-yl)glycerol 3-phosphate = 3-(imidazol-4-yl)-2-oxopropyl phosphate + H2O. The protein operates within amino-acid biosynthesis; L-histidine biosynthesis; L-histidine from 5-phospho-alpha-D-ribose 1-diphosphate: step 6/9. In Prochlorococcus marinus subsp. pastoris (strain CCMP1986 / NIES-2087 / MED4), this protein is Imidazoleglycerol-phosphate dehydratase.